The following is a 233-amino-acid chain: Pyridoxal phosphate homeostasis protein (233 aa).

Lysine 36 carries the post-translational modification N6-(pyridoxal phosphate)lysine.

The protein belongs to the pyridoxal phosphate-binding protein YggS/PROSC family.

In terms of biological role, pyridoxal 5'-phosphate (PLP)-binding protein, which is involved in PLP homeostasis. In Vibrio alginolyticus, this protein is Pyridoxal phosphate homeostasis protein.